Reading from the N-terminus, the 747-residue chain is DNA ligase 1 (747 aa).

A disordered region spans residues 1 to 84 (MQKSITSFFK…KEVDDKTTDK (84 aa)). 7 positions are modified to phosphoserine: S18, S20, S42, S44, S46, S60, and S65. The segment covering 26-42 (PKIDAKTELPDEPHIKS) has biased composition (basic and acidic residues). Positions 60-84 (SEEKTSPVKNVKKEPKEVDDKTTDK) are enriched in basic and acidic residues. The N6-AMP-lysine intermediate role is filled by K395. Residues 725–740 (QSQDQVKNNQKSSTQM) show a composition bias toward polar residues. Residues 725-747 (QSQDQVKNNQKSSTQMEMEDEFY) form a disordered region.

Belongs to the ATP-dependent DNA ligase family.

It localises to the nucleus. The enzyme catalyses ATP + (deoxyribonucleotide)n-3'-hydroxyl + 5'-phospho-(deoxyribonucleotide)m = (deoxyribonucleotide)n+m + AMP + diphosphate.. In terms of biological role, DNA ligase that seals nicks in double-stranded DNA during DNA replication, DNA recombination and DNA repair. This is DNA ligase 1 from Drosophila melanogaster (Fruit fly).